Reading from the N-terminus, the 247-residue chain is Hydroxyacylglutathione hydrolase 1 (247 aa).

The Zn(2+) site is built by histidine 54, histidine 56, aspartate 58, histidine 59, histidine 111, aspartate 128, and histidine 165.

The protein belongs to the metallo-beta-lactamase superfamily. Glyoxalase II family. As to quaternary structure, monomer. Zn(2+) serves as cofactor.

It catalyses the reaction an S-(2-hydroxyacyl)glutathione + H2O = a 2-hydroxy carboxylate + glutathione + H(+). The protein operates within secondary metabolite metabolism; methylglyoxal degradation; (R)-lactate from methylglyoxal: step 2/2. In terms of biological role, thiolesterase that catalyzes the hydrolysis of S-D-lactoyl-glutathione to form glutathione and D-lactic acid. In Vibrio vulnificus (strain YJ016), this protein is Hydroxyacylglutathione hydrolase 1.